A 1009-amino-acid polypeptide reads, in one-letter code: Cilia- and flagella-associated protein 70 (1009 aa).

Positions 410–428 (NLKEDKPVKEKDIDGRPRP) are enriched in basic and acidic residues. The tract at residues 410–457 (NLKEDKPVKEKDIDGRPRPGDVQAPSIKSQSSDTPLEGEPPLSHNPEG) is disordered. TPR repeat units lie at residues 498–531 (PPLT…EYYR), 635–668 (SEQL…EPQN), 669–702 (LDHW…NQSH), 704–736 (HSLL…EPTN), 888–921 (HFIF…SPSC), 923–954 (TWLG…NNYN), and 956–988 (EVWA…KLKD).

It belongs to the CFAP70 family.

It localises to the cell projection. The protein localises to the cilium. The protein resides in the flagellum. Its subcellular location is the cytoplasm. It is found in the cytoskeleton. It localises to the flagellum basal body. The protein localises to the cilium axoneme. Axoneme-binding protein that plays a role in the regulation of ciliary motility and cilium length. The protein is Cilia- and flagella-associated protein 70 of Macaca fascicularis (Crab-eating macaque).